The primary structure comprises 315 residues: 4-hydroxy-3-methylbut-2-enyl diphosphate reductase (315 aa).

Cys-18 provides a ligand contact to [4Fe-4S] cluster. Positions 47 and 80 each coordinate (2E)-4-hydroxy-3-methylbut-2-enyl diphosphate. Residues His-47 and His-80 each contribute to the dimethylallyl diphosphate site. Isopentenyl diphosphate is bound by residues His-47 and His-80. Cys-102 contacts [4Fe-4S] cluster. His-130 lines the (2E)-4-hydroxy-3-methylbut-2-enyl diphosphate pocket. His-130 contacts dimethylallyl diphosphate. His-130 contacts isopentenyl diphosphate. The active-site Proton donor is Glu-132. Thr-171 serves as a coordination point for (2E)-4-hydroxy-3-methylbut-2-enyl diphosphate. Cys-201 contacts [4Fe-4S] cluster. Ser-229, Ser-230, Asn-231, and Ser-274 together coordinate (2E)-4-hydroxy-3-methylbut-2-enyl diphosphate. Residues Ser-229, Ser-230, Asn-231, and Ser-274 each contribute to the dimethylallyl diphosphate site. Isopentenyl diphosphate contacts are provided by Ser-229, Ser-230, Asn-231, and Ser-274.

This sequence belongs to the IspH family. [4Fe-4S] cluster serves as cofactor.

It catalyses the reaction isopentenyl diphosphate + 2 oxidized [2Fe-2S]-[ferredoxin] + H2O = (2E)-4-hydroxy-3-methylbut-2-enyl diphosphate + 2 reduced [2Fe-2S]-[ferredoxin] + 2 H(+). The catalysed reaction is dimethylallyl diphosphate + 2 oxidized [2Fe-2S]-[ferredoxin] + H2O = (2E)-4-hydroxy-3-methylbut-2-enyl diphosphate + 2 reduced [2Fe-2S]-[ferredoxin] + 2 H(+). It functions in the pathway isoprenoid biosynthesis; dimethylallyl diphosphate biosynthesis; dimethylallyl diphosphate from (2E)-4-hydroxy-3-methylbutenyl diphosphate: step 1/1. It participates in isoprenoid biosynthesis; isopentenyl diphosphate biosynthesis via DXP pathway; isopentenyl diphosphate from 1-deoxy-D-xylulose 5-phosphate: step 6/6. Functionally, catalyzes the conversion of 1-hydroxy-2-methyl-2-(E)-butenyl 4-diphosphate (HMBPP) into a mixture of isopentenyl diphosphate (IPP) and dimethylallyl diphosphate (DMAPP). Acts in the terminal step of the DOXP/MEP pathway for isoprenoid precursor biosynthesis. The polypeptide is 4-hydroxy-3-methylbut-2-enyl diphosphate reductase (Hyphomonas neptunium (strain ATCC 15444)).